A 904-amino-acid polypeptide reads, in one-letter code: Alanine--tRNA ligase (904 aa).

Zn(2+) contacts are provided by H594, H598, C695, and H699.

The protein belongs to the class-II aminoacyl-tRNA synthetase family. Zn(2+) serves as cofactor.

Its subcellular location is the cytoplasm. The catalysed reaction is tRNA(Ala) + L-alanine + ATP = L-alanyl-tRNA(Ala) + AMP + diphosphate. In terms of biological role, catalyzes the attachment of alanine to tRNA(Ala) in a two-step reaction: alanine is first activated by ATP to form Ala-AMP and then transferred to the acceptor end of tRNA(Ala). Also edits incorrectly charged Ser-tRNA(Ala) and Gly-tRNA(Ala) via its editing domain. The chain is Alanine--tRNA ligase from Anaeromyxobacter sp. (strain Fw109-5).